Consider the following 358-residue polypeptide: 3-isopropylmalate dehydrogenase (358 aa).

79–92 (GPKWEHLPPDEQPE) is an NAD(+) binding site. 4 residues coordinate substrate: Arg100, Arg110, Arg139, and Asp227. 3 residues coordinate Mg(2+): Asp227, Asp251, and Asp255. 285-297 (GSAPDIAGKGVAN) is a binding site for NAD(+).

It belongs to the isocitrate and isopropylmalate dehydrogenases family. LeuB type 1 subfamily. As to quaternary structure, homodimer. Requires Mg(2+) as cofactor. Mn(2+) is required as a cofactor.

Its subcellular location is the cytoplasm. The enzyme catalyses (2R,3S)-3-isopropylmalate + NAD(+) = 4-methyl-2-oxopentanoate + CO2 + NADH. It functions in the pathway amino-acid biosynthesis; L-leucine biosynthesis; L-leucine from 3-methyl-2-oxobutanoate: step 3/4. Functionally, catalyzes the oxidation of 3-carboxy-2-hydroxy-4-methylpentanoate (3-isopropylmalate) to 3-carboxy-4-methyl-2-oxopentanoate. The product decarboxylates to 4-methyl-2 oxopentanoate. This is 3-isopropylmalate dehydrogenase from Pseudoalteromonas translucida (strain TAC 125).